A 142-amino-acid chain; its full sequence is UPF0306 protein Ent638_3591 (142 aa).

This sequence belongs to the UPF0306 family.

The sequence is that of UPF0306 protein Ent638_3591 from Enterobacter sp. (strain 638).